Reading from the N-terminus, the 945-residue chain is Nonsense-mediated mRNA decay factor SMG8 (945 aa).

Disordered stretches follow at residues 563-604 and 633-671; these read RAEP…SANE and AEAE…ERSA.

It belongs to the SMG8 family.

In terms of biological role, involved in nonsense-mediated decay (NMD) of mRNAs containing premature stop codons. Probable component of kinase complex containing nonC and recruited to stalled ribosomes. In Drosophila grimshawi (Hawaiian fruit fly), this protein is Nonsense-mediated mRNA decay factor SMG8.